The primary structure comprises 403 residues: Phosphoglycerate kinase (403 aa).

Substrate contacts are provided by residues 24–26 (DLN), Arg-39, 62–65 (HLGR), Arg-121, and Arg-161. ATP-binding positions include Lys-211, Gly-299, Glu-330, and 359–362 (GGDS).

It belongs to the phosphoglycerate kinase family. In terms of assembly, monomer.

Its subcellular location is the cytoplasm. The enzyme catalyses (2R)-3-phosphoglycerate + ATP = (2R)-3-phospho-glyceroyl phosphate + ADP. It participates in carbohydrate degradation; glycolysis; pyruvate from D-glyceraldehyde 3-phosphate: step 2/5. This is Phosphoglycerate kinase from Rhodococcus erythropolis (strain PR4 / NBRC 100887).